We begin with the raw amino-acid sequence, 434 residues long: Histidinol dehydrogenase (434 aa).

3 residues coordinate NAD(+): Tyr129, Gln191, and Asn214. Ser240, Gln262, and His265 together coordinate substrate. Gln262 and His265 together coordinate Zn(2+). Active-site proton acceptor residues include Glu329 and His330. Substrate-binding residues include His330, Asp363, Glu417, and His422. Asp363 provides a ligand contact to Zn(2+). His422 provides a ligand contact to Zn(2+).

Belongs to the histidinol dehydrogenase family. It depends on Zn(2+) as a cofactor.

The enzyme catalyses L-histidinol + 2 NAD(+) + H2O = L-histidine + 2 NADH + 3 H(+). The protein operates within amino-acid biosynthesis; L-histidine biosynthesis; L-histidine from 5-phospho-alpha-D-ribose 1-diphosphate: step 9/9. Its function is as follows. Catalyzes the sequential NAD-dependent oxidations of L-histidinol to L-histidinaldehyde and then to L-histidine. In Colwellia psychrerythraea (strain 34H / ATCC BAA-681) (Vibrio psychroerythus), this protein is Histidinol dehydrogenase.